The primary structure comprises 305 residues: tRNA pseudouridine synthase B (305 aa).

The active-site Nucleophile is the Asp39.

The protein belongs to the pseudouridine synthase TruB family. Type 1 subfamily.

It catalyses the reaction uridine(55) in tRNA = pseudouridine(55) in tRNA. Its function is as follows. Responsible for synthesis of pseudouridine from uracil-55 in the psi GC loop of transfer RNAs. This Staphylococcus epidermidis (strain ATCC 35984 / DSM 28319 / BCRC 17069 / CCUG 31568 / BM 3577 / RP62A) protein is tRNA pseudouridine synthase B.